The following is a 369-amino-acid chain: Flagellar P-ring protein 1 (369 aa).

The first 23 residues, Met1–Ala23, serve as a signal peptide directing secretion.

The protein belongs to the FlgI family. As to quaternary structure, the basal body constitutes a major portion of the flagellar organelle and consists of four rings (L,P,S, and M) mounted on a central rod.

The protein localises to the periplasm. The protein resides in the bacterial flagellum basal body. Assembles around the rod to form the L-ring and probably protects the motor/basal body from shearing forces during rotation. This Yersinia pseudotuberculosis serotype I (strain IP32953) protein is Flagellar P-ring protein 1.